The primary structure comprises 92 residues: Defensin-like protein 249 (92 aa).

An N-terminal signal peptide occupies residues 1-24; the sequence is MKLAAIFLASSVLLSLLPIHLSQG. 4 disulfides stabilise this stretch: cysteine 34-cysteine 91, cysteine 45-cysteine 74, cysteine 53-cysteine 84, and cysteine 72-cysteine 86.

This sequence belongs to the DEFL family.

The protein resides in the secreted. This chain is Defensin-like protein 249 (SCRL7), found in Arabidopsis thaliana (Mouse-ear cress).